The following is a 155-amino-acid chain: Endoribonuclease YbeY (155 aa).

The Zn(2+) site is built by His114, His118, and His124.

Belongs to the endoribonuclease YbeY family. Zn(2+) serves as cofactor.

It is found in the cytoplasm. Its function is as follows. Single strand-specific metallo-endoribonuclease involved in late-stage 70S ribosome quality control and in maturation of the 3' terminus of the 16S rRNA. The chain is Endoribonuclease YbeY from Escherichia coli O157:H7.